Reading from the N-terminus, the 108-residue chain is Movement protein TGB2 (108 aa).

Topologically, residues 1–8 (MPLTPPPN) are cytoplasmic. The helical transmembrane segment at 9–29 (YTGLYIAAALGVSLAAVVALF) threads the bilayer. Residues 30–72 (TRSTLPIVGDSQHNLPHGGRYRDGTKAIDYFKPTKLNSVEPGN) lie on the Lumenal side of the membrane. The chain crosses the membrane as a helical span at residues 73-93 (YWYTQPWLLVILLVALICLSG). Over 94–108 (RHAQCCPRCNRVHSA) the chain is Cytoplasmic.

The protein belongs to the Tymovirales TGBp2 protein family.

The protein localises to the host endoplasmic reticulum membrane. Plays a role in viral cell-to-cell propagation, by facilitating genome transport to neighboring plant cells through plasmosdesmata,. The sequence is that of Movement protein TGB2 from Solanum tuberosum (Potato).